The following is a 110-amino-acid chain: Late cornified envelope protein 2D (110 aa).

It belongs to the LCE family. In terms of tissue distribution, skin-specific. Expression was readily detected in adult trunk skin, adult arm skin, fetal skin, penal skin, vulva, esophagus and tongue. Not expressed in the cervix, rectum, lung, colon, or placenta.

Its function is as follows. Precursors of the cornified envelope of the stratum corneum. This chain is Late cornified envelope protein 2D (LCE2D), found in Homo sapiens (Human).